The primary structure comprises 339 residues: Tetraacyldisaccharide 4'-kinase (339 aa).

58 to 65 is a binding site for ATP; that stretch reads NVGGVGKT.

Belongs to the LpxK family.

It catalyses the reaction a lipid A disaccharide + ATP = a lipid IVA + ADP + H(+). Its pathway is glycolipid biosynthesis; lipid IV(A) biosynthesis; lipid IV(A) from (3R)-3-hydroxytetradecanoyl-[acyl-carrier-protein] and UDP-N-acetyl-alpha-D-glucosamine: step 6/6. Its function is as follows. Transfers the gamma-phosphate of ATP to the 4'-position of a tetraacyldisaccharide 1-phosphate intermediate (termed DS-1-P) to form tetraacyldisaccharide 1,4'-bis-phosphate (lipid IVA). This is Tetraacyldisaccharide 4'-kinase from Chromobacterium violaceum (strain ATCC 12472 / DSM 30191 / JCM 1249 / CCUG 213 / NBRC 12614 / NCIMB 9131 / NCTC 9757 / MK).